The primary structure comprises 448 residues: MALEKLGKALNSALRKLARSSTVDEALIREVVRDIQRALIQSDVNVRLVLQLTKRIQERALNEKPPAGVSPREHVIKIVYEELTKLLGKEAVPLEIREKPTILLTVGIQGSGKTTTIAKLARHLQKRGYKVGLVCTDTWRPGAYYQLKQLVEPYNIEVFGDPGEKDAIKLAREGVEYFKDKGVDVIIVDTAGRHKEESGLIEEMKQISEAIKPHEVILVIDGTIGQQAYHQALAFKEATPIGSIIVTKLDGSAKGGGALSAVAATGAPIKFIGVGEKIDDLEPFDPKRFVSRLLGLGDIQGLLEKIEELQKEQEFKEEDVEKFLRGKFNLKDMYAQLEAMQKMGPLKQILQMIPGLGYSLPDEAVRVGEEKLRRYRIIMDSMTEEELENPDIINYSRIKRIARGSGTSTREVRELLAQYNQMRKMFKNLDKRKLAKMAKKFNFGGLGI.

Residues 107–114 (GIQGSGKT), 189–193 (DTAGR), and 247–250 (TKLD) each bind GTP.

This sequence belongs to the GTP-binding SRP family. SRP54 subfamily. Part of the signal recognition particle protein translocation system, which is composed of SRP and FtsY. Archaeal SRP consists of a 7S RNA molecule of 300 nucleotides and two protein subunits: SRP54 and SRP19.

It is found in the cytoplasm. The enzyme catalyses GTP + H2O = GDP + phosphate + H(+). Its function is as follows. Involved in targeting and insertion of nascent membrane proteins into the cytoplasmic membrane. Binds to the hydrophobic signal sequence of the ribosome-nascent chain (RNC) as it emerges from the ribosomes. The SRP-RNC complex is then targeted to the cytoplasmic membrane where it interacts with the SRP receptor FtsY. The protein is Signal recognition particle 54 kDa protein of Thermococcus gammatolerans (strain DSM 15229 / JCM 11827 / EJ3).